The following is a 310-amino-acid chain: Spermatid maturation protein 1 (310 aa).

A helical membrane pass occupies residues Ile29 to Leu49. Positions Ala215–Pro238 are disordered. The stretch at Val262–Tyr286 forms a coiled coil.

In terms of tissue distribution, testis-specific. Exclusively present in cytoplasm of steps 14-16 elongated spermatids (at protein level).

The protein resides in the membrane. Its subcellular location is the cytoplasm. Its function is as follows. Required for proper cytoplasm removal during spermatogenesis. The polypeptide is Spermatid maturation protein 1 (Spem1) (Mus musculus (Mouse)).